A 362-amino-acid chain; its full sequence is tRNA-specific 2-thiouridylase MnmA (362 aa).

ATP is bound by residues alanine 8 to serine 15 and methionine 35. The segment at asparagine 95–aspartate 97 is interaction with target base in tRNA. Cysteine 100 functions as the Nucleophile in the catalytic mechanism. Cysteine 100 and cysteine 196 form a disulfide bridge. Residue glycine 124 participates in ATP binding. Positions lysine 146–glutamine 148 are interaction with tRNA. Cysteine 196 functions as the Cysteine persulfide intermediate in the catalytic mechanism. The tract at residues arginine 303–tyrosine 304 is interaction with tRNA.

Belongs to the MnmA/TRMU family.

The protein localises to the cytoplasm. The enzyme catalyses S-sulfanyl-L-cysteinyl-[protein] + uridine(34) in tRNA + AH2 + ATP = 2-thiouridine(34) in tRNA + L-cysteinyl-[protein] + A + AMP + diphosphate + H(+). Catalyzes the 2-thiolation of uridine at the wobble position (U34) of tRNA, leading to the formation of s(2)U34. The protein is tRNA-specific 2-thiouridylase MnmA of Chlamydia abortus (strain DSM 27085 / S26/3) (Chlamydophila abortus).